Reading from the N-terminus, the 185-residue chain is ATP synthase subunit delta, chloroplastic (185 aa).

This sequence belongs to the ATPase delta chain family. F-type ATPases have 2 components, F(1) - the catalytic core - and F(0) - the membrane proton channel. F(1) has five subunits: alpha(3), beta(3), gamma(1), delta(1), epsilon(1). CF(0) has four main subunits: a(1), b(1), b'(1) and c(10-14). The alpha and beta chains form an alternating ring which encloses part of the gamma chain. F(1) is attached to F(0) by a central stalk formed by the gamma and epsilon chains, while a peripheral stalk is formed by the delta, b and b' chains.

It is found in the plastid. Its subcellular location is the chloroplast thylakoid membrane. In terms of biological role, f(1)F(0) ATP synthase produces ATP from ADP in the presence of a proton or sodium gradient. F-type ATPases consist of two structural domains, F(1) containing the extramembraneous catalytic core and F(0) containing the membrane proton channel, linked together by a central stalk and a peripheral stalk. During catalysis, ATP synthesis in the catalytic domain of F(1) is coupled via a rotary mechanism of the central stalk subunits to proton translocation. This protein is part of the stalk that links CF(0) to CF(1). It either transmits conformational changes from CF(0) to CF(1) or is implicated in proton conduction. The protein is ATP synthase subunit delta, chloroplastic of Gracilaria tenuistipitata var. liui (Red alga).